We begin with the raw amino-acid sequence, 356 residues long: Tyrosine recombinase XerS (356 aa).

Residues 16–121 (IMPWYVLDYY…ALSSLYKYLT (106 aa)) enclose the Core-binding (CB) domain. Residues 169–354 (AFLDYVDKEY…VNDEQKNALD (186 aa)) enclose the Tyr recombinase domain. Active-site residues include Arg210, Lys234, His306, Arg309, and His332. Tyr341 functions as the O-(3'-phospho-DNA)-tyrosine intermediate in the catalytic mechanism.

Belongs to the 'phage' integrase family. XerS subfamily.

It is found in the cytoplasm. With respect to regulation, ftsK is required for recombination. In terms of biological role, site-specific tyrosine recombinase, which acts by catalyzing the cutting and rejoining of the recombining DNA molecules. Essential to convert dimers of the bacterial chromosome into monomers to permit their segregation at cell division. This Streptococcus pyogenes serotype M18 (strain MGAS8232) protein is Tyrosine recombinase XerS.